We begin with the raw amino-acid sequence, 390 residues long: 4-hydroxy-3-methylbut-2-en-1-yl diphosphate synthase (flavodoxin) (390 aa).

Residues Cys281, Cys284, Cys316, and Glu323 each coordinate [4Fe-4S] cluster.

Belongs to the IspG family. It depends on [4Fe-4S] cluster as a cofactor.

It carries out the reaction (2E)-4-hydroxy-3-methylbut-2-enyl diphosphate + oxidized [flavodoxin] + H2O + 2 H(+) = 2-C-methyl-D-erythritol 2,4-cyclic diphosphate + reduced [flavodoxin]. Its pathway is isoprenoid biosynthesis; isopentenyl diphosphate biosynthesis via DXP pathway; isopentenyl diphosphate from 1-deoxy-D-xylulose 5-phosphate: step 5/6. Functionally, converts 2C-methyl-D-erythritol 2,4-cyclodiphosphate (ME-2,4cPP) into 1-hydroxy-2-methyl-2-(E)-butenyl 4-diphosphate. The protein is 4-hydroxy-3-methylbut-2-en-1-yl diphosphate synthase (flavodoxin) of Salinispora arenicola (strain CNS-205).